Here is a 127-residue protein sequence, read N- to C-terminus: Protein ApaG (127 aa).

Residues 3–127 (KDKRYAFSVK…FQLNMPRVLH (125 aa)) form the ApaG domain.

This chain is Protein ApaG, found in Methylobacillus flagellatus (strain ATCC 51484 / DSM 6875 / VKM B-1610 / KT).